The primary structure comprises 103 residues: Putative membrane protein insertion efficiency factor (103 aa).

Belongs to the UPF0161 family.

Its subcellular location is the cell inner membrane. Its function is as follows. Could be involved in insertion of integral membrane proteins into the membrane. The protein is Putative membrane protein insertion efficiency factor of Chlamydia pneumoniae (Chlamydophila pneumoniae).